Here is a 307-residue protein sequence, read N- to C-terminus: tRNA dimethylallyltransferase (307 aa).

9–16 contributes to the ATP binding site; it reads GATGTGKS. A substrate-binding site is contributed by 11–16; that stretch reads TGTGKS.

It belongs to the IPP transferase family. In terms of assembly, monomer. Mg(2+) serves as cofactor.

It carries out the reaction adenosine(37) in tRNA + dimethylallyl diphosphate = N(6)-dimethylallyladenosine(37) in tRNA + diphosphate. Its function is as follows. Catalyzes the transfer of a dimethylallyl group onto the adenine at position 37 in tRNAs that read codons beginning with uridine, leading to the formation of N6-(dimethylallyl)adenosine (i(6)A). The protein is tRNA dimethylallyltransferase of Clavibacter sepedonicus (Clavibacter michiganensis subsp. sepedonicus).